The primary structure comprises 143 residues: Large ribosomal subunit protein uL13 (143 aa).

The protein belongs to the universal ribosomal protein uL13 family. In terms of assembly, part of the 50S ribosomal subunit.

In terms of biological role, this protein is one of the early assembly proteins of the 50S ribosomal subunit, although it is not seen to bind rRNA by itself. It is important during the early stages of 50S assembly. The sequence is that of Large ribosomal subunit protein uL13 from Neisseria meningitidis serogroup C (strain 053442).